The primary structure comprises 77 residues: Putative defensin-like protein 30 (77 aa).

Positions Met1 to Ala26 are cleaved as a signal peptide. Intrachain disulfides connect Cys43–Cys63, Cys49–Cys72, and Cys53–Cys74.

This sequence belongs to the DEFL family.

Its subcellular location is the secreted. This Arabidopsis thaliana (Mouse-ear cress) protein is Putative defensin-like protein 30.